We begin with the raw amino-acid sequence, 251 residues long: Carboxy-S-adenosyl-L-methionine synthase (251 aa).

S-adenosyl-L-methionine-binding positions include Y48, 73-75 (GCS), N140, and R207.

This sequence belongs to the class I-like SAM-binding methyltransferase superfamily. Cx-SAM synthase family. Homodimer.

The catalysed reaction is prephenate + S-adenosyl-L-methionine = carboxy-S-adenosyl-L-methionine + 3-phenylpyruvate + H2O. Functionally, catalyzes the conversion of S-adenosyl-L-methionine (SAM) to carboxy-S-adenosyl-L-methionine (Cx-SAM). This Hydrogenovibrio crunogenus (strain DSM 25203 / XCL-2) (Thiomicrospira crunogena) protein is Carboxy-S-adenosyl-L-methionine synthase.